The chain runs to 383 residues: Lipid-A-disaccharide synthase (383 aa).

This sequence belongs to the LpxB family.

It catalyses the reaction a lipid X + a UDP-2-N,3-O-bis[(3R)-3-hydroxyacyl]-alpha-D-glucosamine = a lipid A disaccharide + UDP + H(+). It functions in the pathway bacterial outer membrane biogenesis; LPS lipid A biosynthesis. Condensation of UDP-2,3-diacylglucosamine and 2,3-diacylglucosamine-1-phosphate to form lipid A disaccharide, a precursor of lipid A, a phosphorylated glycolipid that anchors the lipopolysaccharide to the outer membrane of the cell. This Alcanivorax borkumensis (strain ATCC 700651 / DSM 11573 / NCIMB 13689 / SK2) protein is Lipid-A-disaccharide synthase.